Reading from the N-terminus, the 232-residue chain is Pseudaminic acid cytidylyltransferase (232 aa).

The protein belongs to the CMP-NeuNAc synthase family. Mg(2+) is required as a cofactor.

It catalyses the reaction pseudaminate + CTP = CMP-pseudaminate + diphosphate. In terms of biological role, catalyzes the final step in the biosynthesis of pseudaminic acid, a sialic-acid-like sugar that is used to modify flagellin. Mediates the activation of pseudaminic acid with CMP by forming CMP-pseudaminic acid. This chain is Pseudaminic acid cytidylyltransferase (pseF), found in Campylobacter jejuni subsp. jejuni serotype O:2 (strain ATCC 700819 / NCTC 11168).